A 349-amino-acid chain; its full sequence is Meiotic recombination protein DMC1 homolog (349 aa).

138 to 145 (GEFRSGKT) provides a ligand contact to ATP. Residue R240 coordinates dsDNA. SsDNA is bound by residues R240, F243, R246, R252, and R320. Residues R246 and R252 each contribute to the dsDNA site.

Belongs to the RecA family. DMC1 subfamily. As to quaternary structure, double stacked ring-shaped homooctamer.

The protein resides in the nucleus. In terms of biological role, may participate in meiotic recombination. This chain is Meiotic recombination protein DMC1 homolog (LIM15), found in Lilium longiflorum (Trumpet lily).